A 64-amino-acid chain; its full sequence is Putative calcium channel toxin Tx758 (64 aa).

Residues 1 to 18 (MSTFVIVFLLLTAVLCHA) form the signal peptide. Positions 19–27 (EPALDETAR) are excised as a propeptide. Disulfide bonds link Cys-29/Cys-43, Cys-36/Cys-49, and Cys-42/Cys-58.

This sequence belongs to the scorpion calcin-like family. Expressed by the venom gland.

Its subcellular location is the secreted. May increase intracellular calcium release through the activation of nuclear inositol 1,4,5-trisphosphate receptors (ITPR) of cardiomyocytes, thereby causing an increase in the contraction frequency of these cells. In Buthus israelis (Israeli scorpion), this protein is Putative calcium channel toxin Tx758.